The sequence spans 282 residues: 4-hydroxybenzoate octaprenyltransferase (282 aa).

9 consecutive transmembrane segments (helical) span residues 17-37 (IGILLLWYPTAWALWMANQGF), 40-60 (IDLLMIFLLGTVFMRSAGCVI), 90-110 (AFILLFILLCASLLLLLKLPI), 113-133 (FYFAVISVLITFLYPFCKRFL), 135-155 (APQLILGLAFSMGIPMAFIAS), 163-183 (FIVLFLINFSWIIAYDTMYAM), 207-227 (LIIALLLIFLHSLWLVWAINK), 231-251 (WFFYLLWCTAAGILTYQLKLI), and 262-282 (AFLVSGYYGLVMWFAVGLALI).

Belongs to the UbiA prenyltransferase family. The cofactor is Mg(2+).

The protein resides in the cell inner membrane. The catalysed reaction is all-trans-octaprenyl diphosphate + 4-hydroxybenzoate = 4-hydroxy-3-(all-trans-octaprenyl)benzoate + diphosphate. It participates in cofactor biosynthesis; ubiquinone biosynthesis. Its function is as follows. Catalyzes the prenylation of para-hydroxybenzoate (PHB) with an all-trans polyprenyl group. Mediates the second step in the final reaction sequence of ubiquinone-8 (UQ-8) biosynthesis, which is the condensation of the polyisoprenoid side chain with PHB, generating the first membrane-bound Q intermediate 3-octaprenyl-4-hydroxybenzoate. The polypeptide is 4-hydroxybenzoate octaprenyltransferase (Legionella pneumophila subsp. pneumophila (strain Philadelphia 1 / ATCC 33152 / DSM 7513)).